The following is a 167-amino-acid chain: Phospholipase A2 inhibitor alpha-like protein (167 aa).

Residues 1–19 (MQLILLSSLLLLGLSLANG) form the signal peptide. A C-type lectin domain is found at 62–163 (GSERLYVTNK…CDEDLLVVCE (102 aa)). Disulfide bonds link cysteine 83–cysteine 162 and cysteine 140–cysteine 154.

This sequence belongs to the alpha-type phospholipase A2 inhibitor family. Homotrimer.

Its subcellular location is the secreted. In terms of biological role, has no PLA2 inhibitory activity. In Elaphe climacophora (Japanese rat snake), this protein is Phospholipase A2 inhibitor alpha-like protein.